Consider the following 447-residue polypeptide: Trigger factor (447 aa).

The region spanning 159–244 (GDMLLMQVES…VREIKEEKLP (86 aa)) is the PPIase FKBP-type domain.

Belongs to the FKBP-type PPIase family. Tig subfamily.

It is found in the cytoplasm. It catalyses the reaction [protein]-peptidylproline (omega=180) = [protein]-peptidylproline (omega=0). Functionally, involved in protein export. Acts as a chaperone by maintaining the newly synthesized protein in an open conformation. Functions as a peptidyl-prolyl cis-trans isomerase. The chain is Trigger factor from Dehalococcoides mccartyi (strain ATCC BAA-2100 / JCM 16839 / KCTC 5957 / BAV1).